The chain runs to 464 residues: UDP-N-acetylmuramate--L-alanine ligase (464 aa).

112–118 (GTHGKTT) provides a ligand contact to ATP.

Belongs to the MurCDEF family.

It localises to the cytoplasm. It carries out the reaction UDP-N-acetyl-alpha-D-muramate + L-alanine + ATP = UDP-N-acetyl-alpha-D-muramoyl-L-alanine + ADP + phosphate + H(+). The protein operates within cell wall biogenesis; peptidoglycan biosynthesis. Cell wall formation. The sequence is that of UDP-N-acetylmuramate--L-alanine ligase from Chromobacterium violaceum (strain ATCC 12472 / DSM 30191 / JCM 1249 / CCUG 213 / NBRC 12614 / NCIMB 9131 / NCTC 9757 / MK).